The sequence spans 550 residues: MAELTISTEEIRGALERYVSSYSADVSREEVGTVADAGDGIAHVEGLPSTMTNELLEFEDGTIGVALNLDVREIGVVVLGDFAGIEEGQRVKRTGRVLSAPVGDAFLGRVVNALGEPIDGLGDIPNEGFRELELQAPNVMSRKSVDEPLQTGIKAIDAMTPIGRGQRQLIIGDRKTGKTTVALDTILNQRDNWRSGDPKKQVRCIYVAVGQKASTIASIKGVLEEAGAMEYTTIVASPASDPAGFKYLAPYTGSSIGQHWMYGGKHVLIVFDDLSKQAEAYRAVSLLLRRPPGREAYPGDVFYLHSRLLERCAKLSDEMGGGSMTGLPIIETKANDISAFIPTNVISITDGQIFLETDLFNQGVRPAINVGTSVSRVGGSAQVKPMKKVSGSLRLNLAQYRELEAFAAFASDLDKASRAQLERGSRLVELLKQPNYTPFPVQDQVVLVWAGVEGKLDDIPVGEIGRFESEFLQYLRHKHEGVLAQIAGGTWGDEVIASLDAAISDFKKLFLGKEDELRINEPAAEPLAGEEDRETVTRFHDDATDRPAGS.

172–179 (GDRKTGKT) serves as a coordination point for ATP. The tract at residues 521-550 (EPAAEPLAGEEDRETVTRFHDDATDRPAGS) is disordered. Residues 534–550 (ETVTRFHDDATDRPAGS) show a composition bias toward basic and acidic residues.

It belongs to the ATPase alpha/beta chains family. F-type ATPases have 2 components, CF(1) - the catalytic core - and CF(0) - the membrane proton channel. CF(1) has five subunits: alpha(3), beta(3), gamma(1), delta(1), epsilon(1). CF(0) has three main subunits: a(1), b(2) and c(9-12). The alpha and beta chains form an alternating ring which encloses part of the gamma chain. CF(1) is attached to CF(0) by a central stalk formed by the gamma and epsilon chains, while a peripheral stalk is formed by the delta and b chains.

It is found in the cell membrane. The catalysed reaction is ATP + H2O + 4 H(+)(in) = ADP + phosphate + 5 H(+)(out). Functionally, produces ATP from ADP in the presence of a proton gradient across the membrane. The alpha chain is a regulatory subunit. The chain is ATP synthase subunit alpha from Salinispora tropica (strain ATCC BAA-916 / DSM 44818 / JCM 13857 / NBRC 105044 / CNB-440).